The sequence spans 359 residues: CMP-N-acetylneuraminate-poly-alpha-2,8-sialyltransferase (359 aa).

At 1 to 7 the chain is on the cytoplasmic side; the sequence is MRSIRKR. Residues 8–20 form a helical; Signal-anchor for type II membrane protein membrane-spanning segment; the sequence is WTICTISLLLIFY. Residues 21–359 are Lumenal-facing; sequence KTKEIARTEE…KLTTGKCVKQ (339 aa). Asparagine 50, asparagine 74, and asparagine 119 each carry an N-linked (GlcNAc...) asparagine glycan. 2 disulfide bridges follow: cysteine 142–cysteine 292 and cysteine 156–cysteine 356. Residues asparagine 147 and asparagine 170 each contribute to the CMP-N-acetyl-beta-neuraminate site. N-linked (GlcNAc...) asparagine glycosylation is found at asparagine 204 and asparagine 219. The CMP-N-acetyl-beta-neuraminate site is built by serine 279, threonine 280, glycine 281, and tryptophan 301. Residue histidine 331 is the Proton donor/acceptor of the active site.

Belongs to the glycosyltransferase 29 family. In terms of processing, autopolysialylated.

It localises to the golgi apparatus membrane. The protein localises to the secreted. It catalyses the reaction [N-acetyl-alpha-D-neuraminosyl-(2-&gt;8)](n) + CMP-N-acetyl-beta-neuraminate = [N-acetyl-alpha-D-neuraminosyl-(2-&gt;8)](n+1) + CMP + H(+). In terms of biological role, catalyzes the transfer of a sialic acid from a CMP-linked sialic acid donor onto a terminal alpha-2,3-, alpha-2,6-, or alpha-2,8-linked sialic acid of an N-linked glycan protein acceptor through alpha-2,8-linkages. Therefore, participates in polysialic acid synthesis on various sialylated N-acetyllactosaminyl oligosaccharides, including NCAM1 N-glycans, FETUB N-glycans and AHSG. It is noteworthy that alpha-2,3-linked sialic acid is apparently a better acceptor than alpha-2,6-linked sialic acid. This is CMP-N-acetylneuraminate-poly-alpha-2,8-sialyltransferase (ST8SIA4) from Pan troglodytes (Chimpanzee).